The chain runs to 148 residues: Macrodomain Ter protein (148 aa).

It belongs to the MatP family. Homodimer.

Its subcellular location is the cytoplasm. In terms of biological role, required for spatial organization of the terminus region of the chromosome (Ter macrodomain) during the cell cycle. Prevents early segregation of duplicated Ter macrodomains during cell division. Binds specifically to matS, which is a 13 bp signature motif repeated within the Ter macrodomain. The protein is Macrodomain Ter protein of Haemophilus influenzae (strain 86-028NP).